The sequence spans 838 residues: Ribonuclease Z (838 aa).

Ser824 carries the post-translational modification Phosphoserine.

It belongs to the RNase Z family. In terms of assembly, homodimer. It depends on Zn(2+) as a cofactor.

Its subcellular location is the cytoplasm. The protein resides in the nucleus. The enzyme catalyses Endonucleolytic cleavage of RNA, removing extra 3' nucleotides from tRNA precursor, generating 3' termini of tRNAs. A 3'-hydroxy group is left at the tRNA terminus and a 5'-phosphoryl group is left at the trailer molecule.. Its function is as follows. Zinc phosphodiesterase, which displays some tRNA 3'-processing endonuclease activity. Probably involved in tRNA maturation, by removing a 3'-trailer from precursor tRNA. This Saccharomyces cerevisiae (strain ATCC 204508 / S288c) (Baker's yeast) protein is Ribonuclease Z (TRZ1).